A 539-amino-acid chain; its full sequence is Putative cysteine ligase BshC (539 aa).

A coiled-coil region spans residues 455-475 (LQKNAAFIQDQLLFLERTVTK).

This sequence belongs to the BshC family.

Involved in bacillithiol (BSH) biosynthesis. May catalyze the last step of the pathway, the addition of cysteine to glucosamine malate (GlcN-Mal) to generate BSH. This is Putative cysteine ligase BshC from Bacillus velezensis (strain DSM 23117 / BGSC 10A6 / LMG 26770 / FZB42) (Bacillus amyloliquefaciens subsp. plantarum).